The following is a 184-amino-acid chain: Ribosome-recycling factor (184 aa).

A disordered region spans residues 141 to 165 (DEKNGDITEDDLRSQTDDVQKATDN).

This sequence belongs to the RRF family.

Its subcellular location is the cytoplasm. Its function is as follows. Responsible for the release of ribosomes from messenger RNA at the termination of protein biosynthesis. May increase the efficiency of translation by recycling ribosomes from one round of translation to another. In Staphylococcus epidermidis (strain ATCC 35984 / DSM 28319 / BCRC 17069 / CCUG 31568 / BM 3577 / RP62A), this protein is Ribosome-recycling factor.